The chain runs to 417 residues: UDP-N-acetylglucosamine 1-carboxyvinyltransferase (417 aa).

22-23 (KN) provides a ligand contact to phosphoenolpyruvate. Residue Arg-92 coordinates UDP-N-acetyl-alpha-D-glucosamine. Catalysis depends on Cys-116, which acts as the Proton donor. Cys-116 bears the 2-(S-cysteinyl)pyruvic acid O-phosphothioketal mark. UDP-N-acetyl-alpha-D-glucosamine-binding residues include Asp-304 and Ile-326.

The protein belongs to the EPSP synthase family. MurA subfamily.

The protein resides in the cytoplasm. The catalysed reaction is phosphoenolpyruvate + UDP-N-acetyl-alpha-D-glucosamine = UDP-N-acetyl-3-O-(1-carboxyvinyl)-alpha-D-glucosamine + phosphate. It functions in the pathway cell wall biogenesis; peptidoglycan biosynthesis. Cell wall formation. Adds enolpyruvyl to UDP-N-acetylglucosamine. The chain is UDP-N-acetylglucosamine 1-carboxyvinyltransferase from Geotalea daltonii (strain DSM 22248 / JCM 15807 / FRC-32) (Geobacter daltonii).